We begin with the raw amino-acid sequence, 357 residues long: MRKMKKVMLTTGGTGGHIYPALAVADRLKIKGIEAVFVGSMERMEKDLVPESGHKFIGVDISVPRGLKNIRKYLKAIRTAYKVIKEEKPDAIIGFGNYISVPVIIAGILLRKKIYLQEQNVNIGSANKMFYKIAKMTFLAFDKTYDDIPIKSQSRFKVTGNPLRKEIDGLKYATEREKLGIKPSEKVLLITGGSLGAQEINNIVMKYWEKFCADKNLRIFWATGNNFEQLKKVRKTKKENDRIEPYFNDMLNVMAAADLVVCRAGALTISEIIELEKPAIIIPYGSIKVGQYENAKVLTNYDAAYVFTRDELDESMKRVFEIIRNDEKLKKMRIRLKPLKKPNAAEEIIASLDIWRN.

Residues 14 to 16 (TGG), asparagine 120, arginine 164, serine 194, and glutamine 291 each bind UDP-N-acetyl-alpha-D-glucosamine.

It belongs to the glycosyltransferase 28 family. MurG subfamily.

The protein localises to the cell inner membrane. The enzyme catalyses di-trans,octa-cis-undecaprenyl diphospho-N-acetyl-alpha-D-muramoyl-L-alanyl-D-glutamyl-meso-2,6-diaminopimeloyl-D-alanyl-D-alanine + UDP-N-acetyl-alpha-D-glucosamine = di-trans,octa-cis-undecaprenyl diphospho-[N-acetyl-alpha-D-glucosaminyl-(1-&gt;4)]-N-acetyl-alpha-D-muramoyl-L-alanyl-D-glutamyl-meso-2,6-diaminopimeloyl-D-alanyl-D-alanine + UDP + H(+). The protein operates within cell wall biogenesis; peptidoglycan biosynthesis. Cell wall formation. Catalyzes the transfer of a GlcNAc subunit on undecaprenyl-pyrophosphoryl-MurNAc-pentapeptide (lipid intermediate I) to form undecaprenyl-pyrophosphoryl-MurNAc-(pentapeptide)GlcNAc (lipid intermediate II). This Fusobacterium nucleatum subsp. nucleatum (strain ATCC 25586 / DSM 15643 / BCRC 10681 / CIP 101130 / JCM 8532 / KCTC 2640 / LMG 13131 / VPI 4355) protein is UDP-N-acetylglucosamine--N-acetylmuramyl-(pentapeptide) pyrophosphoryl-undecaprenol N-acetylglucosamine transferase.